A 608-amino-acid polypeptide reads, in one-letter code: Translation initiation factor RLI1 (608 aa).

4Fe-4S ferredoxin-type domains lie at 7–39 (RIAI…KLCI) and 46–75 (KIAF…IINL). ABC transporter domains are found at residues 70–320 (IQII…FLDG) and 345–568 (LQND…LKNL). ATP is bound at residue 110-117 (GTNGIGKS). Position 349 is a phosphoserine (Ser349). 385–392 (GENGTGKT) is an ATP binding site.

It belongs to the ABC transporter superfamily. ABCE family. Component of the multifactor complex (MFC) composed of at least RLI1, the eIF2 subunit SUI2, TIF5/eIF5, and the eIF3 subunits PRT1, HCR1, NIP1, RPG1, TIF34 and TIF35. The complex associates with pre-initiation complexes. Interacts with the complex YAE1:LTO1; the complex bridges the interaction between the CIA complex and RLI1.

It is found in the cytoplasm. The protein resides in the nucleus. In terms of biological role, component of the multifactor complex (MFC) involved in translation initiation. Required for the binding of MFC to the 40S ribosome. Required for the processing and nuclear export of the 60S and 40S ribosomal subunits. This Saccharomyces cerevisiae (strain ATCC 204508 / S288c) (Baker's yeast) protein is Translation initiation factor RLI1 (RLI1).